The primary structure comprises 476 residues: Glycogen synthase (476 aa).

K15 is an ADP-alpha-D-glucose binding site.

It belongs to the glycosyltransferase 1 family. Bacterial/plant glycogen synthase subfamily.

The enzyme catalyses [(1-&gt;4)-alpha-D-glucosyl](n) + ADP-alpha-D-glucose = [(1-&gt;4)-alpha-D-glucosyl](n+1) + ADP + H(+). It participates in glycan biosynthesis; glycogen biosynthesis. Functionally, synthesizes alpha-1,4-glucan chains using ADP-glucose. The polypeptide is Glycogen synthase (Yersinia pestis bv. Antiqua (strain Antiqua)).